A 610-amino-acid polypeptide reads, in one-letter code: MVWFKMMSAIEWAEKYRPRTLGDVVGNRKAVQDLRKWAEEWQSGIPEKRAVILYGPAGIGKTSSAHALAGDMEWEVIELNASDQRTAGVIEKIAGSAASMNTFFGGKRLIILDEADNLHGTADRGGMRAISGIIKSTLQPIILIANDIYGLTPTVRNICLEIKFGSVQSRSMVPALKKVCESEGVSCSQEAVLQIAENAGGDFRSAINDLQAAANGKKALEAEDISTAGRDVKENIFKAMQKIFKSTDCKRALESAYGLDESPEDLVHWIDENLPIQYARKDGDLEDIKTGFGYLSKADIYLGRVKKRQNYRMWRYASMLMVCGAALSKTRPYPGFIKYQQPSLWRRLGQTRSRRDMRDNIASKIGEHSFESMHYSRNNLLGFYSILLKDEASAVELTANLGLELEELMYLSGSAKVSKKLQKIYDEAQNLLETKRDRTEEQEFFKAPAPAADDKQATLHCPVNIPEKEGNASAEKPESPGPQSPERKQKTLDLGFDTPQKLPEKKRSSEMKLPENPEPAENNLFSLSEPLPEKGPIPDFAGKKSLPELEEEKPSLSPLKKMSPANKEASKQGVKQGASEKGSPAADTQGGMEDGSKKAEPKNQKTLFDF.

55 to 62 (GPAGIGKT) lines the ATP pocket. Basic and acidic residues-rich tracts occupy residues 467 to 478 (EKEGNASAEKPE), 502 to 515 (LPEK…KLPE), and 594 to 603 (DGSKKAEPKN). A disordered region spans residues 467 to 610 (EKEGNASAEK…PKNQKTLFDF (144 aa)).

The protein belongs to the activator 1 small subunits family. RfcL subfamily. As to quaternary structure, heteromultimer composed of small subunits (RfcS) and large subunits (RfcL).

Functionally, part of the RFC clamp loader complex which loads the PCNA sliding clamp onto DNA. In Methanosarcina mazei (strain ATCC BAA-159 / DSM 3647 / Goe1 / Go1 / JCM 11833 / OCM 88) (Methanosarcina frisia), this protein is Replication factor C large subunit.